Reading from the N-terminus, the 35-residue chain is Photosystem II reaction center protein T (35 aa).

A helical transmembrane segment spans residues 3 to 23 (ALVYTFLLVSTLGIIFFAIFF).

Belongs to the PsbT family. PSII is composed of 1 copy each of membrane proteins PsbA, PsbB, PsbC, PsbD, PsbE, PsbF, PsbH, PsbI, PsbJ, PsbK, PsbL, PsbM, PsbT, PsbY, PsbZ, Psb30/Ycf12, at least 3 peripheral proteins of the oxygen-evolving complex and a large number of cofactors. It forms dimeric complexes.

It is found in the plastid. It localises to the chloroplast thylakoid membrane. Functionally, found at the monomer-monomer interface of the photosystem II (PS II) dimer, plays a role in assembly and dimerization of PSII. PSII is a light-driven water plastoquinone oxidoreductase, using light energy to abstract electrons from H(2)O, generating a proton gradient subsequently used for ATP formation. This Cabomba caroliniana (Carolina fanwort) protein is Photosystem II reaction center protein T.